Consider the following 433-residue polypeptide: Protein translocase subunit SecY (433 aa).

Transmembrane regions (helical) follow at residues 17–37, 71–91, 117–137, 141–161, 184–204, 212–232, 268–288, 310–330, 366–386, and 388–408; these read IIFT…PIPG, IFAL…LMSV, LTVL…ESMV, GPVV…TLVV, LIIF…MFEL, PLIA…IIFF, GVIP…LANF, YILL…AIVF, LTVI…LLMN, and YVIS…VVLD.

This sequence belongs to the SecY/SEC61-alpha family. As to quaternary structure, component of the Sec protein translocase complex. Heterotrimer consisting of SecY, SecE and SecG subunits. The heterotrimers can form oligomers, although 1 heterotrimer is thought to be able to translocate proteins. Interacts with the ribosome. Interacts with SecDF, and other proteins may be involved. Interacts with SecA.

Its subcellular location is the cell inner membrane. Functionally, the central subunit of the protein translocation channel SecYEG. Consists of two halves formed by TMs 1-5 and 6-10. These two domains form a lateral gate at the front which open onto the bilayer between TMs 2 and 7, and are clamped together by SecE at the back. The channel is closed by both a pore ring composed of hydrophobic SecY resides and a short helix (helix 2A) on the extracellular side of the membrane which forms a plug. The plug probably moves laterally to allow the channel to open. The ring and the pore may move independently. This chain is Protein translocase subunit SecY, found in Rickettsia typhi (strain ATCC VR-144 / Wilmington).